The sequence spans 168 residues: Gastrula zinc finger protein XlCGF42.1 (168 aa).

6 C2H2-type zinc fingers span residues 6-28 (YSCS…RKSH), 34-56 (FCCS…YRTH), 62-84 (CICS…QKYH), 90-112 (FSCS…LRIH), 118-140 (YTCT…LRIH), and 146-165 (FTCS…DRHH).

Belongs to the krueppel C2H2-type zinc-finger protein family.

Its subcellular location is the nucleus. May be involved in transcriptional regulation. The sequence is that of Gastrula zinc finger protein XlCGF42.1 from Xenopus laevis (African clawed frog).